Reading from the N-terminus, the 819-residue chain is Zinc finger protein 27 (819 aa).

A KRAB domain is found at 1 to 75 (MDVTIDFSRE…KTLGAESCHD (75 aa)). Residues 93 to 123 (PKRPRHWDPPEDEPKHSSDLQTHDESNGLKR) are disordered. The span at 98-120 (HWDPPEDEPKHSSDLQTHDESNG) shows a compositional bias: basic and acidic residues. 21 consecutive C2H2-type zinc fingers follow at residues 205 to 227 (YVCV…QKTH), 233 to 255 (YKCG…RRIH), 261 to 283 (YDCS…QKIH), 289 to 311 (HGCV…QKIH), 317 to 339 (YVCI…RRIH), 345 to 367 (YACD…QRIH), 401 to 423 (SICA…QRTH), 429 to 451 (YQCG…RRIH), 457 to 479 (YVCV…QVIH), 485 to 507 (YQCG…KRIH), 513 to 535 (YVCS…QKTH), 541 to 563 (YVCA…QRIH), 569 to 591 (YGCS…EKIH), 597 to 619 (YGCR…QKIH), 625 to 647 (HVCA…QRIH), 653 to 675 (YGCT…RPIH), 681 to 703 (YVCA…QKTH), 709 to 731 (YACS…HRIH), 737 to 759 (YDCG…QRIH), 765 to 787 (YRCA…QTTH), and 793 to 815 (YKCV…ENVH).

Belongs to the krueppel C2H2-type zinc-finger protein family.

Its subcellular location is the nucleus. Its function is as follows. May be involved in transcriptional regulation. The polypeptide is Zinc finger protein 27 (Zfp27) (Mus musculus (Mouse)).